The following is a 394-amino-acid chain: S-adenosylmethionine synthase 1 (394 aa).

A Mg(2+)-binding site is contributed by E11. Residue H17 coordinates ATP. E45 provides a ligand contact to K(+). E58 and Q101 together coordinate L-methionine. ATP contacts are provided by residues 169–171 (DGK), 237–240 (SGRF), D248, 254–255 (RK), A271, K275, and K279. D248 is a binding site for L-methionine. K279 provides a ligand contact to L-methionine.

The protein belongs to the AdoMet synthase family. As to quaternary structure, homotetramer. Mn(2+) serves as cofactor. Mg(2+) is required as a cofactor. It depends on Co(2+) as a cofactor. The cofactor is K(+).

Its subcellular location is the cytoplasm. The catalysed reaction is L-methionine + ATP + H2O = S-adenosyl-L-methionine + phosphate + diphosphate. It participates in amino-acid biosynthesis; S-adenosyl-L-methionine biosynthesis; S-adenosyl-L-methionine from L-methionine: step 1/1. Its function is as follows. Catalyzes the formation of S-adenosylmethionine from methionine and ATP. The reaction comprises two steps that are both catalyzed by the same enzyme: formation of S-adenosylmethionine (AdoMet) and triphosphate, and subsequent hydrolysis of the triphosphate. The protein is S-adenosylmethionine synthase 1 (SAMS1) of Triticum monococcum (Einkorn wheat).